The following is a 332-amino-acid chain: 4-hydroxythreonine-4-phosphate dehydrogenase (332 aa).

Residues histidine 136 and threonine 137 each coordinate substrate. 3 residues coordinate a divalent metal cation: histidine 166, histidine 211, and histidine 266. Positions 274, 283, and 292 each coordinate substrate.

Belongs to the PdxA family. As to quaternary structure, homodimer. The cofactor is Zn(2+). Mg(2+) is required as a cofactor. Co(2+) serves as cofactor.

Its subcellular location is the cytoplasm. It catalyses the reaction 4-(phosphooxy)-L-threonine + NAD(+) = 3-amino-2-oxopropyl phosphate + CO2 + NADH. Its pathway is cofactor biosynthesis; pyridoxine 5'-phosphate biosynthesis; pyridoxine 5'-phosphate from D-erythrose 4-phosphate: step 4/5. Functionally, catalyzes the NAD(P)-dependent oxidation of 4-(phosphooxy)-L-threonine (HTP) into 2-amino-3-oxo-4-(phosphooxy)butyric acid which spontaneously decarboxylates to form 3-amino-2-oxopropyl phosphate (AHAP). The polypeptide is 4-hydroxythreonine-4-phosphate dehydrogenase (Wigglesworthia glossinidia brevipalpis).